The sequence spans 998 residues: MDFPSQSEKKKYITKKRTTLFSYDDDDDDDDFDQNREFIHMSSYEESKDQQNSFNTLLLSELSNCEDQKQQQQQQSSSPTQSDCDSSPTNNNNNNNTNNNIVHHLNNSNSIPISGSNNNNNNNNNNNNNNNNNNNNNNNSHHHHLRKGRRLFHDDNDDQPIYPASASLSSTKTNMFPSSPILYSSPSSQQQQQQQQQQSQSQQTNEFKVPSFTPLSFINNSSTNSMNIRPINNNRIYNNLNNNNNNNNNNNNNINNINNNNINNINNNYNNNNNNEEDQIFSSSLPTSPVSWSANGSMMNGHNINNITGNHSRFLSNGSYNKGNTFPSTEVKRVRPDQRAFNENSFSMSPTPSPPPTPSLKRNNYSSPKFEPVFIRLAEERTNRKRSTSMTSNVNNNNNNNANNNNVNNNNNNNNGPNSISSLIANVNPFTEEGRLQSLNKPCPSFQLVNNNNNNNNASNNNNDNNNNNNNNNNNNNNNDDTCNNNNNNSQNIDNNLITKFSLYKHTFQELDLIGEGSFGHVYKVRHRIDGCLYAIKKTKKPLKGQKDRDIVLREVYGLSAIKDHTNIVRYFNAWEEDSHIFIQMEHCNGGNIYKWVTEHIKQSESNLLLLAKQILTGIVYIHSLGLVHLDIKPENIYIIYKCNQNQIITNNNNTCSINNSSNGSDSYFKSKIKTTENDLDNFITTTNSVNNNNCNNNNNNNVDNQNNNNQNNYLIIDGNKINFNSITFKIGDLGLLNEATNTKIYSEGDSRYLSRELLHDDMSALKKSDIFSLGCTLYELARCKPLPKSGMEWDSIRNGILSFEKEDSIYDDNKNDFSTEFWQLIKSMIHPDPSVRPSAEQLLEHPLIKYGVIEIDDFENEIETLKNLLAEKEKVLIIQKEKQKLRQNQLQQKMQQPNFIELKQQPQQQQEKQQMLHQQKQQYLEQHNNNNDNNNNEFDESEKEYQIQLEQFKIQKMQFQLQQEQLQYQHQHKHQNFFTKQICTASQIEGGIKNMAL.

Disordered stretches follow at residues 1–34 (MDFPSQSEKKKYITKKRTTLFSYDDDDDDDDFDQ), 65–207 (CEDQ…TNEF), 265–284 (INNNYNNNNNNEEDQIFSSS), 316–367 (SNGS…NYSS), 380–420 (ERTN…PNSI), and 435–489 (RLQS…NNNN). Acidic residues predominate over residues 23–32 (YDDDDDDDDF). Residues 70–139 (QQQQQQSSSP…NNNNNNNNNN (70 aa)) show a composition bias toward low complexity. Residues 140-150 (SHHHHLRKGRR) are compositionally biased toward basic residues. The segment covering 166–177 (ASLSSTKTNMFP) has biased composition (polar residues). Low complexity-rich tracts occupy residues 184–203 (SSPSSQQQQQQQQQQSQSQQ) and 265–274 (INNNYNNNNN). The span at 316-328 (SNGSYNKGNTFPS) shows a compositional bias: polar residues. Basic and acidic residues predominate over residues 330–340 (EVKRVRPDQRA). Composition is skewed to low complexity over residues 393–415 (NVNNNNNNNANNNNVNNNNNNNN) and 450–489 (NNNNNNNNASNNNNDNNNNNNNNNNNNNNNDDTCNNNNNN). One can recognise a Protein kinase domain in the interval 508-849 (FQELDLIGEG…AEQLLEHPLI (342 aa)). ATP is bound by residues 514 to 522 (IGEGSFGHV) and K537. Residue D631 is the Proton acceptor of the active site. Residues N636 and E677 each contribute to the Mg(2+) site.

The protein belongs to the protein kinase superfamily. Ser/Thr protein kinase family. WEE1 subfamily.

The catalysed reaction is L-seryl-[protein] + ATP = O-phospho-L-seryl-[protein] + ADP + H(+). It catalyses the reaction L-threonyl-[protein] + ATP = O-phospho-L-threonyl-[protein] + ADP + H(+). The chain is Probable protein kinase DDB_G0277539 from Dictyostelium discoideum (Social amoeba).